Here is a 176-residue protein sequence, read N- to C-terminus: Adenine phosphoribosyltransferase (176 aa).

This sequence belongs to the purine/pyrimidine phosphoribosyltransferase family. Homodimer.

The protein localises to the cytoplasm. The enzyme catalyses AMP + diphosphate = 5-phospho-alpha-D-ribose 1-diphosphate + adenine. It participates in purine metabolism; AMP biosynthesis via salvage pathway; AMP from adenine: step 1/1. Its function is as follows. Catalyzes a salvage reaction resulting in the formation of AMP, that is energically less costly than de novo synthesis. This Borreliella afzelii (strain PKo) (Borrelia afzelii) protein is Adenine phosphoribosyltransferase.